We begin with the raw amino-acid sequence, 143 residues long: Large ribosomal subunit protein uL11 (143 aa).

The protein belongs to the universal ribosomal protein uL11 family. Part of the ribosomal stalk of the 50S ribosomal subunit. Interacts with L10 and the large rRNA to form the base of the stalk. L10 forms an elongated spine to which L12 dimers bind in a sequential fashion forming a multimeric L10(L12)X complex. One or more lysine residues are methylated.

Forms part of the ribosomal stalk which helps the ribosome interact with GTP-bound translation factors. The chain is Large ribosomal subunit protein uL11 from Stutzerimonas stutzeri (strain A1501) (Pseudomonas stutzeri).